Reading from the N-terminus, the 217-residue chain is Putative N-acetylmuramoyl-L-alanine amidase (217 aa).

A MurNAc-LAA domain is found at 3 to 206 (IAIDAGHGGQ…ISKSISIALK (204 aa)).

This sequence belongs to the N-acetylmuramoyl-L-alanine amidase 3 family.

The protein resides in the secreted. It catalyses the reaction Hydrolyzes the link between N-acetylmuramoyl residues and L-amino acid residues in certain cell-wall glycopeptides.. Cell-wall hydrolase involved in septum cleavage during cell division. The protein is Putative N-acetylmuramoyl-L-alanine amidase (amiB) of Buchnera aphidicola subsp. Baizongia pistaciae (strain Bp).